Consider the following 544-residue polypeptide: GMP synthase [glutamine-hydrolyzing] (544 aa).

The 199-residue stretch at 12 to 210 folds into the Glutamine amidotransferase type-1 domain; the sequence is TILILDFGSQ…VKNVCSVRDG (199 aa). Residue Cys-88 is the Nucleophile of the active site. Catalysis depends on residues His-184 and Glu-186. Residues 211-419 enclose the GMPS ATP-PPase domain; it reads WSMESFIPKE…LNIPEHLVGR (209 aa). Residue 239 to 245 coordinates ATP; it reads SGGVDST. Arg-312, Asp-481, Lys-536, and Glu-542 together coordinate XMP.

Homodimer. Also forms a small population of homotetramers. Requires Mg(2+) as cofactor.

The protein localises to the cytoplasm. The protein resides in the cytosol. It catalyses the reaction XMP + L-glutamine + ATP + H2O = GMP + L-glutamate + AMP + diphosphate + 2 H(+). Its pathway is purine metabolism; GMP biosynthesis; GMP from XMP (L-Gln route): step 1/1. Functionally, catalyzes the conversion of xanthine monophosphate (XMP) to GMP in the presence of glutamine and ATP through an adenyl-XMP intermediate. The chain is GMP synthase [glutamine-hydrolyzing] from Cryptococcus neoformans var. neoformans serotype D (strain JEC21 / ATCC MYA-565) (Filobasidiella neoformans).